Consider the following 757-residue polypeptide: Tyrosine-protein kinase HTK16 (757 aa).

The SH2 1 domain maps to 10–102 (WYHGKITREV…GLPCKLVDFC (93 aa)). ANK repeat units lie at residues 115 to 147 (GLDT…NVNA), 151 to 180 (SGLT…DASA), 184 to 214 (NGRT…DFLK), 219 to 248 (NGWV…SMYP), and 252 to 281 (DGDT…NQPK). The SH2 2 domain occupies 287 to 379 (WLHQNLDRNG…GLPTLLQFPV (93 aa)). Disordered regions lie at residues 381-407 (SAEN…PSRP) and 444-467 (PKLP…QKGD). The segment covering 455 to 467 (EVPNSVNVGQKGD) has biased composition (polar residues). The region spanning 484 to 740 (ISFGKELGVG…PTFNELHSTF (257 aa)) is the Protein kinase domain. Residues 490-498 (LGVGEFGSV) and K516 each bind ATP. D608 acts as the Proton acceptor in catalysis. Y746 bears the Phosphotyrosine mark.

This sequence belongs to the protein kinase superfamily. Tyr protein kinase family. Epithelial cells.

It catalyses the reaction L-tyrosyl-[protein] + ATP = O-phospho-L-tyrosyl-[protein] + ADP + H(+). Functionally, may be involved in signal transduction. This chain is Tyrosine-protein kinase HTK16 (HTK16), found in Hydra vulgaris (Hydra).